Consider the following 417-residue polypeptide: Creatine kinase U-type, mitochondrial (417 aa).

The N-terminal 39 residues, 1–39 (MAGPFSRLLSARPGLRLLALAGAGSLAAGFLLRPEPVRA), are a transit peptide targeting the mitochondrion. Positions 40–64 (ASERRRLYPPSAEYPDLRKHNNCMA) are cardiolipin-binding. The region spanning 45-131 (RLYPPSAEYP…FDPVIQERHN (87 aa)) is the Phosphagen kinase N-terminal domain. Ser151 carries the phosphoserine modification. The region spanning 158 to 400 (YVLSSRVRTG…NYLIDCERRL (243 aa)) is the Phosphagen kinase C-terminal domain. 161–165 (SSRVR) is an ATP binding site. At Ser196 the chain carries Phosphoserine. Thr213 is subject to Phosphothreonine. His224 is an ATP binding site. Residue Ser232 is modified to Phosphoserine. ATP contacts are provided by residues Arg269, Arg325, 353-358 (RGTGGV), and Asp368. Position 355 is a phosphothreonine (Thr355).

The protein belongs to the ATP:guanido phosphotransferase family. As to quaternary structure, exists as an octamer composed of four MTCK homodimers.

The protein localises to the mitochondrion inner membrane. The catalysed reaction is creatine + ATP = N-phosphocreatine + ADP + H(+). Its function is as follows. Reversibly catalyzes the transfer of phosphate between ATP and various phosphogens (e.g. creatine phosphate). Creatine kinase isoenzymes play a central role in energy transduction in tissues with large, fluctuating energy demands, such as skeletal muscle, heart, brain and spermatozoa. The polypeptide is Creatine kinase U-type, mitochondrial (CKMT1A) (Homo sapiens (Human)).